A 491-amino-acid chain; its full sequence is Cytosolic Fe-S cluster assembly factor NAR1 (491 aa).

The [4Fe-4S] cluster site is built by cysteine 20, cysteine 59, cysteine 62, cysteine 65, cysteine 177, cysteine 231, cysteine 412, and cysteine 416.

Belongs to the NARF family. As to quaternary structure, interacts with CIA1.

In terms of biological role, component of the cytosolic Fe/S protein assembly machinery. Required for maturation of extramitochondrial Fe/S proteins. May play a role in the transfer of pre-assembled Fe/S clusters to target apoproteins. The protein is Cytosolic Fe-S cluster assembly factor NAR1 (NAR1) of Saccharomyces cerevisiae (strain YJM789) (Baker's yeast).